We begin with the raw amino-acid sequence, 157 residues long: Phosphopantetheine adenylyltransferase (157 aa).

Ser9 lines the substrate pocket. ATP is bound by residues 9–10 (SF) and His17. 3 residues coordinate substrate: Lys41, Val73, and Lys87. ATP contacts are provided by residues 88–90 (GLR), Glu98, and 122–128 (YSFVSSS).

It belongs to the bacterial CoaD family. In terms of assembly, homohexamer. Mg(2+) serves as cofactor.

It localises to the cytoplasm. It carries out the reaction (R)-4'-phosphopantetheine + ATP + H(+) = 3'-dephospho-CoA + diphosphate. It functions in the pathway cofactor biosynthesis; coenzyme A biosynthesis; CoA from (R)-pantothenate: step 4/5. Functionally, reversibly transfers an adenylyl group from ATP to 4'-phosphopantetheine, yielding dephospho-CoA (dPCoA) and pyrophosphate. This Mycobacterium marinum (strain ATCC BAA-535 / M) protein is Phosphopantetheine adenylyltransferase.